A 338-amino-acid chain; its full sequence is MQKFQIKVPASSANIGPGFDVLGMSLEEYMTLDVEVSTESGPCVLTYEGDGKEHVSLDVQKNMITQTSLYVLRCNNISTFPYATKIHVINPIPLGRGMGSSGSAAIAGVMLANEIAKLGLSKLQMMDYVLMIERHPDNVMASMMGGFVGSFLRELSEEEKNAFSPSADDLLKNEALTLPPKSLGTFARLPWASELKAIVVIPEFHLATSKARSVLPTSYGRTDVVYNLQRLALLTTALGQTPINPHLVYEVMKDKVHQPYRASLIPGLQNILATLNPDTQPGLCGICLSGAGPTVLALATGNFDEIAHAMLSIFEKHGVKCRYLVLSPAFDGATVKYF.

Belongs to the GHMP kinase family. Homoserine kinase subfamily.

It carries out the reaction L-homoserine + ATP = O-phospho-L-homoserine + ADP + H(+). Its pathway is amino-acid biosynthesis; L-threonine biosynthesis; L-threonine from L-aspartate: step 4/5. In terms of biological role, commits homoserine to the threonine biosynthesis pathway by catalyzing its O-phosphorylation. The polypeptide is Homoserine kinase (Schizosaccharomyces pombe (strain 972 / ATCC 24843) (Fission yeast)).